The primary structure comprises 126 residues: Large ribosomal subunit protein uL29 (126 aa).

The protein belongs to the universal ribosomal protein uL29 family.

The chain is Large ribosomal subunit protein uL29 (rpl35) from Dictyostelium discoideum (Social amoeba).